Consider the following 669-residue polypeptide: Bestrophin-3 (669 aa).

Residues 1–31 lie on the Cytoplasmic side of the membrane; that stretch reads MTVTYSSKVANATFFGFHRLLLKWRGSIYKL. Ala-10 serves as a coordination point for Ca(2+). Residues 32 to 51 traverse the membrane as a helical segment; the sequence is LYREFIVFAVLYTAISLVYR. The Extracellular segment spans residues 52 to 60; sequence LLLTGAQKR. The chain crosses the membrane as a helical span at residues 61–82; sequence YFEKLSIYCDRYAEQIPVTFVL. The Cytoplasmic portion of the chain corresponds to 83–237; it reads GFYVTLVVNR…DWVGIPLVYT (155 aa). A helical transmembrane segment spans residues 238-255; sequence QVVTLAVYTFFFACLIGR. Residues 256 to 274 are Extracellular-facing; the sequence is QFLDPTKGYVGHDLDLYVP. A helical transmembrane segment spans residues 275–288; the sequence is IFTLLQFFFYAGWL. Residues 289 to 669 lie on the Cytoplasmic side of the membrane; that stretch reads KVAEQLINPF…GTPQRPRTWF (381 aa). Positions 293, 296, 301, and 304 each coordinate Ca(2+). 4 disordered regions span residues 399-496, 533-560, 591-627, and 646-669; these read LSTH…TKMP, QPSG…SAST, TSLG…GAGS, and ILEF…RTWF. Residues 440 to 451 show a composition bias toward basic residues; sequence NPHRGSPTRKQS. Residues 475 to 492 are compositionally biased toward low complexity; the sequence is RTSTLQSLSPQSSVRSSP. The span at 533–543 shows a compositional bias: polar residues; the sequence is QPSGTEQQVEP. The segment covering 646 to 656 has biased composition (basic and acidic residues); that stretch reads ILEFNNEHTGE.

This sequence belongs to the anion channel-forming bestrophin (TC 1.A.46) family. Calcium-sensitive chloride channel subfamily. As to expression, expressed in heart. In terms of tissue distribution, expressed in brain, retina/retinal pigment epithelium (RPE) and skeletal muscle. Expressed in acinar cells of parotid glands. Expressed in lung, kidney and testis.

It localises to the cell membrane. The enzyme catalyses chloride(in) = chloride(out). In terms of biological role, ligand-gated anion channel that allows the movement of chloride monoatomic anions across cell membranes when activated by calcium (Ca2+). Functionally, does not function as calcium-gated chloride channel. The sequence is that of Bestrophin-3 (Best3) from Mus musculus (Mouse).